A 506-amino-acid polypeptide reads, in one-letter code: NAD(P)H-quinone oxidoreductase subunit 2 (506 aa).

13 helical membrane-spanning segments follow: residues alanine 14–alanine 34, tryptophan 42–tryptophan 62, leucine 79–tryptophan 99, proline 108–glycine 128, leucine 132–tyrosine 152, leucine 167–leucine 187, phenylalanine 206–valine 226, proline 240–isoleucine 260, leucine 276–glutamine 296, methionine 302–threonine 322, valine 330–phenylalanine 350, leucine 374–glycine 394, and leucine 409–isoleucine 429.

Belongs to the complex I subunit 2 family. In terms of assembly, NDH-1 can be composed of about 15 different subunits; different subcomplexes with different compositions have been identified which probably have different functions.

Its subcellular location is the cellular thylakoid membrane. The enzyme catalyses a plastoquinone + NADH + (n+1) H(+)(in) = a plastoquinol + NAD(+) + n H(+)(out). The catalysed reaction is a plastoquinone + NADPH + (n+1) H(+)(in) = a plastoquinol + NADP(+) + n H(+)(out). In terms of biological role, NDH-1 shuttles electrons from an unknown electron donor, via FMN and iron-sulfur (Fe-S) centers, to quinones in the respiratory and/or the photosynthetic chain. The immediate electron acceptor for the enzyme in this species is believed to be plastoquinone. Couples the redox reaction to proton translocation, and thus conserves the redox energy in a proton gradient. Cyanobacterial NDH-1 also plays a role in inorganic carbon-concentration. The protein is NAD(P)H-quinone oxidoreductase subunit 2 of Prochlorococcus marinus (strain MIT 9312).